Consider the following 220-residue polypeptide: Large ribosomal subunit protein uL3 (220 aa).

The segment at 61–81 is disordered; the sequence is KGSKSNKYANKPAEGHAKKAD.

Belongs to the universal ribosomal protein uL3 family. As to quaternary structure, part of the 50S ribosomal subunit. Forms a cluster with proteins L14 and L19.

In terms of biological role, one of the primary rRNA binding proteins, it binds directly near the 3'-end of the 23S rRNA, where it nucleates assembly of the 50S subunit. This is Large ribosomal subunit protein uL3 from Staphylococcus epidermidis (strain ATCC 35984 / DSM 28319 / BCRC 17069 / CCUG 31568 / BM 3577 / RP62A).